A 257-amino-acid polypeptide reads, in one-letter code: 5'-nucleotidase SurE (257 aa).

A divalent metal cation contacts are provided by D8, D9, S39, and N87. Positions 234–257 (VSPLTAPHPTTGHEGLAGLAEKYQ) are disordered.

The protein belongs to the SurE nucleotidase family. A divalent metal cation is required as a cofactor.

Its subcellular location is the cytoplasm. It carries out the reaction a ribonucleoside 5'-phosphate + H2O = a ribonucleoside + phosphate. Nucleotidase that shows phosphatase activity on nucleoside 5'-monophosphates. The sequence is that of 5'-nucleotidase SurE from Natronomonas pharaonis (strain ATCC 35678 / DSM 2160 / CIP 103997 / JCM 8858 / NBRC 14720 / NCIMB 2260 / Gabara) (Halobacterium pharaonis).